Here is a 240-residue protein sequence, read N- to C-terminus: Uridylate kinase (240 aa).

Residue 12-15 (KLSG) participates in ATP binding. Residue glycine 54 coordinates UMP. ATP-binding residues include glycine 55 and arginine 59. UMP contacts are provided by residues aspartate 74 and 135–142 (TGNPFFTT). Residues threonine 162, tyrosine 168, and aspartate 171 each coordinate ATP.

Belongs to the UMP kinase family. In terms of assembly, homohexamer.

It localises to the cytoplasm. It catalyses the reaction UMP + ATP = UDP + ADP. Its pathway is pyrimidine metabolism; CTP biosynthesis via de novo pathway; UDP from UMP (UMPK route): step 1/1. Inhibited by UTP. In terms of biological role, catalyzes the reversible phosphorylation of UMP to UDP. This Xanthomonas campestris pv. campestris (strain ATCC 33913 / DSM 3586 / NCPPB 528 / LMG 568 / P 25) protein is Uridylate kinase.